The sequence spans 262 residues: Purine nucleoside phosphorylase SSP1584 (262 aa).

Zn(2+)-binding residues include H79, C124, and H141.

Belongs to the purine nucleoside phosphorylase YfiH/LACC1 family. In terms of assembly, homodimer. It depends on Cu(2+) as a cofactor. Requires Zn(2+) as cofactor.

The catalysed reaction is adenosine + phosphate = alpha-D-ribose 1-phosphate + adenine. It carries out the reaction S-methyl-5'-thioadenosine + phosphate = 5-(methylsulfanyl)-alpha-D-ribose 1-phosphate + adenine. It catalyses the reaction inosine + phosphate = alpha-D-ribose 1-phosphate + hypoxanthine. The enzyme catalyses adenosine + H2O + H(+) = inosine + NH4(+). Purine nucleoside enzyme that catalyzes the phosphorolysis of adenosine and inosine nucleosides, yielding D-ribose 1-phosphate and the respective free bases, adenine and hypoxanthine. Also catalyzes the phosphorolysis of S-methyl-5'-thioadenosine into adenine and S-methyl-5-thio-alpha-D-ribose 1-phosphate. Also has adenosine deaminase activity. This Staphylococcus saprophyticus subsp. saprophyticus (strain ATCC 15305 / DSM 20229 / NCIMB 8711 / NCTC 7292 / S-41) protein is Purine nucleoside phosphorylase SSP1584.